A 444-amino-acid polypeptide reads, in one-letter code: ATP-dependent protease ATPase subunit HslU (444 aa).

Residues Ile18, 60–65, Asp256, Glu322, and Arg394 each bind ATP; that span reads GVGKTE.

The protein belongs to the ClpX chaperone family. HslU subfamily. A double ring-shaped homohexamer of HslV is capped on each side by a ring-shaped HslU homohexamer. The assembly of the HslU/HslV complex is dependent on binding of ATP.

The protein resides in the cytoplasm. Its function is as follows. ATPase subunit of a proteasome-like degradation complex; this subunit has chaperone activity. The binding of ATP and its subsequent hydrolysis by HslU are essential for unfolding of protein substrates subsequently hydrolyzed by HslV. HslU recognizes the N-terminal part of its protein substrates and unfolds these before they are guided to HslV for hydrolysis. The sequence is that of ATP-dependent protease ATPase subunit HslU from Buchnera aphidicola subsp. Cinara cedri (strain Cc).